The sequence spans 459 residues: Heat stress transcription factor A-4d (459 aa).

Residues 127-189 (AESERRELEE…QKNIVASLCE (63 aa)) adopt a coiled-coil conformation. Positions 141-191 (LKYEKSILVADLQRQNQQQYVINWQMQAMEGRLVAMEQRQKNIVASLCEML) are hydrophobic repeat HR-A/B. Positions 209 to 213 (SKKRR) match the Nuclear localization signal motif. Positions 364-388 (YPTQADVNSEIASSTDTSQDGTSET) are enriched in polar residues. The tract at residues 364-398 (YPTQADVNSEIASSTDTSQDGTSETEASHGPTNDV) is disordered. The AHA signature appears at 397-406 (DVFWERFLTE).

Belongs to the HSF family. Class A subfamily. In terms of assembly, homotrimer. Exhibits temperature-dependent phosphorylation.

Its subcellular location is the nucleus. Functionally, transcriptional regulator that specifically binds DNA of heat shock promoter elements (HSE). The protein is Heat stress transcription factor A-4d (HSFA4D) of Oryza sativa subsp. japonica (Rice).